Consider the following 428-residue polypeptide: Kynureninase (428 aa).

Pyridoxal 5'-phosphate contacts are provided by residues Thr104, Thr105, 132–135, Asp213, His216, and Tyr238; that span reads FPSD. The residue at position 239 (Lys239) is an N6-(pyridoxal phosphate)lysine. 2 residues coordinate pyridoxal 5'-phosphate: Trp267 and Thr295.

This sequence belongs to the kynureninase family. Homodimer. Pyridoxal 5'-phosphate is required as a cofactor.

It carries out the reaction L-kynurenine + H2O = anthranilate + L-alanine + H(+). It catalyses the reaction 3-hydroxy-L-kynurenine + H2O = 3-hydroxyanthranilate + L-alanine + H(+). It functions in the pathway amino-acid degradation; L-kynurenine degradation; L-alanine and anthranilate from L-kynurenine: step 1/1. The protein operates within cofactor biosynthesis; NAD(+) biosynthesis; quinolinate from L-kynurenine: step 2/3. Functionally, catalyzes the cleavage of L-kynurenine (L-Kyn) and L-3-hydroxykynurenine (L-3OHKyn) into anthranilic acid (AA) and 3-hydroxyanthranilic acid (3-OHAA), respectively. This Geobacillus thermodenitrificans (strain NG80-2) protein is Kynureninase.